Consider the following 509-residue polypeptide: 2,3-bisphosphoglycerate-independent phosphoglycerate mutase (509 aa).

Positions 14 and 64 each coordinate Mn(2+). Ser-64 acts as the Phosphoserine intermediate in catalysis. Substrate-binding positions include His-125, 155–156, Arg-187, Arg-193, 259–262, and Lys-332; these read RD and RADR. Positions 399, 403, 440, 441, and 459 each coordinate Mn(2+).

Belongs to the BPG-independent phosphoglycerate mutase family. As to quaternary structure, monomer. The cofactor is Mn(2+).

It catalyses the reaction (2R)-2-phosphoglycerate = (2R)-3-phosphoglycerate. The protein operates within carbohydrate degradation; glycolysis; pyruvate from D-glyceraldehyde 3-phosphate: step 3/5. Its function is as follows. Catalyzes the interconversion of 2-phosphoglycerate and 3-phosphoglycerate. The polypeptide is 2,3-bisphosphoglycerate-independent phosphoglycerate mutase (Psychromonas ingrahamii (strain DSM 17664 / CCUG 51855 / 37)).